The primary structure comprises 472 residues: WASH complex subunit 1 (472 aa).

The tract at residues 1-51 (MPQNRSMESQAYSLPLILPDLRREEAIHQITDTLQHLQTVSNDIFSRILQR) is required for WASH complex assembly. Disordered regions lie at residues 289–365 (ENSR…SDGR), 377–412 (GIGK…GDLM), and 426–472 (ISGK…DWES). Pro residues-rich tracts occupy residues 301 to 319 (LPPP…PPEP) and 327 to 336 (SLAPPLPIPA). A VCA region spans residues 352–472 (QGAPKEVVNP…GDGDEEDWES (121 aa)). The WH2 domain maps to 364 to 386 (GRASLLESIRQAGGIGKAKLRNV). Residues 385–401 (NVKEKKLEKKKMKEQEQ) are compositionally biased toward basic and acidic residues.

The protein belongs to the WASH1 family. As to quaternary structure, component of the WASH complex.

The protein localises to the early endosome membrane. It is found in the recycling endosome membrane. Functionally, acts as a nucleation-promoting factor at the surface of endosomes, where it recruits and activates the Arp2/3 complex to induce actin polymerization, playing a key role in the fission of tubules that serve as transport intermediates during endosome sorting. This Xenopus tropicalis (Western clawed frog) protein is WASH complex subunit 1.